The chain runs to 398 residues: Elongation factor Tu (398 aa).

One can recognise a tr-type G domain in the interval 10–207; the sequence is KPHVNIGTIG…TVDEYIPEPE (198 aa). The segment at 19–26 is G1; it reads GHVDHGKT. A GTP-binding site is contributed by 19–26; it reads GHVDHGKT. Thr-26 contacts Mg(2+). The interval 63–67 is G2; that stretch reads GITIN. Residues 84 to 87 are G3; sequence DAPG. GTP contacts are provided by residues 84–88 and 139–142; these read DAPGH and NKVD. Positions 139-142 are G4; the sequence is NKVD. The tract at residues 177–179 is G5; sequence SAL.

Belongs to the TRAFAC class translation factor GTPase superfamily. Classic translation factor GTPase family. EF-Tu/EF-1A subfamily. As to quaternary structure, monomer.

The protein localises to the cytoplasm. It catalyses the reaction GTP + H2O = GDP + phosphate + H(+). Its function is as follows. GTP hydrolase that promotes the GTP-dependent binding of aminoacyl-tRNA to the A-site of ribosomes during protein biosynthesis. This Streptococcus sanguinis (strain SK36) protein is Elongation factor Tu.